The primary structure comprises 74 residues: uncharacterized protein (74 aa).

This is an uncharacterized protein from Staphylococcus aureus.